Here is a 498-residue protein sequence, read N- to C-terminus: Actin-binding protein WASF2 (498 aa).

Disordered regions lie at residues 173 to 203 (KEKRKHRKEKKDNPNRGNVNPRKIKTRKEEW) and 240 to 435 (NVDA…AVSD). Residues 252 to 263 (SDSASSPSPSFS) show a composition bias toward low complexity. A compositionally biased stretch (pro residues) spans 298-407 (SHPPPAPPLG…PPPGPPPPPF (110 aa)). Positions 436-453 (ARSDLLSAIRQGFQLRRV) constitute a WH2 domain. A Phosphoserine modification is found at serine 474.

This sequence belongs to the SCAR/WAVE family. In terms of assembly, binds actin and the Arp2/3 complex. Interacts with BAIAP2. Component of the WAVE2 complex composed of ABI1, CYFIP1/SRA1, NCKAP1/NAP1 (NCKAP1l/HEM1 in hematopoietic cells) and WASF2/WAVE2. Directly interacts with BRK1. Interacts with FNBP1L (via the SH3 domain). As to quaternary structure, (Microbial infection) Interacts with human cytomegalovirus protein UL135. As to expression, expressed in all tissues with strongest expression in placenta, lung, and peripheral blood leukocytes, but not in skeletal muscle.

The protein localises to the cytoplasm. It localises to the cytoskeleton. The protein resides in the cell projection. Its subcellular location is the lamellipodium. It is found in the basolateral cell membrane. Its function is as follows. Downstream effector molecule involved in the transmission of signals from tyrosine kinase receptors and small GTPases to the actin cytoskeleton. Promotes formation of actin filaments. Part of the WAVE complex that regulates lamellipodia formation. The WAVE complex regulates actin filament reorganization via its interaction with the Arp2/3 complex. The chain is Actin-binding protein WASF2 from Homo sapiens (Human).